Here is a 333-residue protein sequence, read N- to C-terminus: Holliday junction branch migration complex subunit RuvB (333 aa).

The segment at 1-182 (MEERLVSGEV…FGVISRLEYY (182 aa)) is large ATPase domain (RuvB-L). Residues leucine 21, arginine 22, glycine 63, lysine 66, threonine 67, threonine 68, 129–131 (EDY), arginine 172, tyrosine 182, and arginine 219 each bind ATP. Threonine 67 contacts Mg(2+). The tract at residues 183 to 253 (HVDQLAQIIE…LAVEALERLQ (71 aa)) is small ATPAse domain (RuvB-S). Residues 256–333 (RLGLDQIDHK…THLGMEVPKR (78 aa)) are head domain (RuvB-H). The DNA site is built by arginine 311 and arginine 316.

It belongs to the RuvB family. In terms of assembly, homohexamer. Forms an RuvA(8)-RuvB(12)-Holliday junction (HJ) complex. HJ DNA is sandwiched between 2 RuvA tetramers; dsDNA enters through RuvA and exits via RuvB. An RuvB hexamer assembles on each DNA strand where it exits the tetramer. Each RuvB hexamer is contacted by two RuvA subunits (via domain III) on 2 adjacent RuvB subunits; this complex drives branch migration. In the full resolvosome a probable DNA-RuvA(4)-RuvB(12)-RuvC(2) complex forms which resolves the HJ.

The protein localises to the cytoplasm. The enzyme catalyses ATP + H2O = ADP + phosphate + H(+). Functionally, the RuvA-RuvB-RuvC complex processes Holliday junction (HJ) DNA during genetic recombination and DNA repair, while the RuvA-RuvB complex plays an important role in the rescue of blocked DNA replication forks via replication fork reversal (RFR). RuvA specifically binds to HJ cruciform DNA, conferring on it an open structure. The RuvB hexamer acts as an ATP-dependent pump, pulling dsDNA into and through the RuvAB complex. RuvB forms 2 homohexamers on either side of HJ DNA bound by 1 or 2 RuvA tetramers; 4 subunits per hexamer contact DNA at a time. Coordinated motions by a converter formed by DNA-disengaged RuvB subunits stimulates ATP hydrolysis and nucleotide exchange. Immobilization of the converter enables RuvB to convert the ATP-contained energy into a lever motion, pulling 2 nucleotides of DNA out of the RuvA tetramer per ATP hydrolyzed, thus driving DNA branch migration. The RuvB motors rotate together with the DNA substrate, which together with the progressing nucleotide cycle form the mechanistic basis for DNA recombination by continuous HJ branch migration. Branch migration allows RuvC to scan DNA until it finds its consensus sequence, where it cleaves and resolves cruciform DNA. This chain is Holliday junction branch migration complex subunit RuvB, found in Geobacillus kaustophilus (strain HTA426).